The following is a 910-amino-acid chain: Disease susceptibility protein LOV1 (910 aa).

Residues 22-60 are a coiled coil; that stretch reads ARLNGIGEQVDGLKRQLGRLQSLLKDADAKKHESERVRN. The region spanning 169–461 is the NB-ARC domain; it reads EQSVEALAGH…AAEGIITSSD (293 aa). 6 LRR repeats span residues 584-609, 610-632, 634-655, 700-725, 726-751, and 847-871; these read LPLLRVLDLSRVKFEGGKLPSSIGDL, IHLRFLSLHRAWISHLPSSLRNL, LLLYLNLGFNGMVHVPNVLKEM, MTKLRELSLFITDGSSDTLSSSLGQL, RSLEVLHLYDRQEPRVAYHGGEIVLN, and MPLLRALTICNCRKLKLPGGINYIT.

The protein belongs to the disease resistance NB-LRR family. RPP8/HRT subfamily.

Its function is as follows. Confers susceptibility to the fungus Cochliobolus victoriae by conditioning victorin-dependent (victorin is a toxin synthesized by C.victoriae) induction of defense-associated proteins. The sequence is that of Disease susceptibility protein LOV1 (LOV1) from Arabidopsis thaliana (Mouse-ear cress).